The sequence spans 425 residues: G protein-activated inward rectifier potassium channel 2 (425 aa).

The Cytoplasmic segment spans residues 1–91; that stretch reads MTMAKLTESM…IFTTLVDLKW (91 aa). Residues serine 18 and serine 25 each carry the phosphoserine modification. A helical transmembrane segment spans residues 92 to 116; sequence RFNLLIFVMVYTVTWLFFGMIWWLI. Residues 117-140 lie on the Extracellular side of the membrane; the sequence is AYIRGDMDHIEDPSWTPCVTNLNG. The segment at residues 141 to 152 is an intramembrane region (helical; Pore-forming); the sequence is FVSAFLFSIETE. The segment at residues 153-159 is an intramembrane region (pore-forming); the sequence is TTIGYGY. A Selectivity filter motif is present at residues 154–159; sequence TIGYGY. Over 160–168 the chain is Extracellular; sequence RVITDKCPE. A helical membrane pass occupies residues 169-190; sequence GIILLLIQSVLGSIVNAFMVGC. Residues 191–425 lie on the Cytoplasmic side of the membrane; that stretch reads MFVKISQPKK…VANLENESKV (235 aa). Residues 392–425 form a disordered region; the sequence is NQHAELETEEEEKNPEELTERNGDVANLENESKV. The short motif at 422 to 425 is the PDZ-binding element; that stretch reads ESKV.

The protein belongs to the inward rectifier-type potassium channel (TC 1.A.2.1) family. KCNJ6 subfamily. Associates with KCNJ3/GIRK1 or KCNJ5/GRIK4 to form a G-protein-activated heteromultimer pore-forming unit. The resulting inward current is much larger. Interacts (via PDZ-binding motif) with SNX27 (via PDZ domain); the interaction is required for recycling to the plasma membrane when endocytosed and prevent degradation in lysosomes. In terms of tissue distribution, pancreatic beta cells and brain.

Its subcellular location is the membrane. The enzyme catalyses K(+)(in) = K(+)(out). Activated by phosphatidylinositol 4,5 biphosphate (PtdIns(4,5)P2). Functionally, inward rectifier potassium channels are characterized by a greater tendency to allow potassium to flow into the cell rather than out of it. Their voltage dependence is regulated by the concentration of extracellular potassium; as external potassium is raised, the voltage range of the channel opening shifts to more positive voltages. The inward rectification is mainly due to the blockage of outward current by internal magnesium. This potassium channel may be involved in the regulation of insulin secretion by glucose and/or neurotransmitters acting through G-protein-coupled receptors. This is G protein-activated inward rectifier potassium channel 2 (Kcnj6) from Rattus norvegicus (Rat).